Reading from the N-terminus, the 396-residue chain is UDP-galactose translocator (396 aa).

10 helical membrane passes run alanine 3 to leucine 23, tyrosine 37 to alanine 57, phenylalanine 65 to leucine 85, leucine 97 to valine 117, threonine 140 to leucine 160, tryptophan 169 to glycine 189, glycine 200 to phenylalanine 220, leucine 238 to valine 258, proline 269 to valine 289, and leucine 315 to valine 335. Residues proline 358–aspartate 379 are disordered. The ER retention motif motif lies at lysine 392–serine 396.

Belongs to the nucleotide-sugar transporter family. SLC35A subfamily. In terms of assembly, interacts with SLC35A3; the interaction is reduced in the presence of SLC35A4. Found in a complex with SLC35A3 and SLC35A4. Interacts with B4GALT4.

It is found in the endoplasmic reticulum membrane. Its subcellular location is the golgi apparatus membrane. It carries out the reaction UMP(out) + UDP-alpha-D-galactose(in) = UMP(in) + UDP-alpha-D-galactose(out). It catalyses the reaction UDP-N-acetyl-alpha-D-galactosamine(in) + UMP(out) = UDP-N-acetyl-alpha-D-galactosamine(out) + UMP(in). The enzyme catalyses UMP(out) + UDP-alpha-D-glucose(in) = UMP(in) + UDP-alpha-D-glucose(out). The catalysed reaction is UMP(out) + UDP-N-acetyl-alpha-D-glucosamine(in) = UMP(in) + UDP-N-acetyl-alpha-D-glucosamine(out). It carries out the reaction UDP-alpha-D-galactose(in) + AMP(out) = UDP-alpha-D-galactose(out) + AMP(in). It catalyses the reaction UDP-alpha-D-galactose(in) + CMP(out) = UDP-alpha-D-galactose(out) + CMP(in). The enzyme catalyses UDP-N-acetyl-alpha-D-galactosamine(out) + UDP-alpha-D-galactose(in) = UDP-N-acetyl-alpha-D-galactosamine(in) + UDP-alpha-D-galactose(out). The catalysed reaction is UDP-N-acetyl-alpha-D-glucosamine(out) + UDP-alpha-D-galactose(in) = UDP-N-acetyl-alpha-D-glucosamine(in) + UDP-alpha-D-galactose(out). It carries out the reaction UDP-alpha-D-galactose(in) + UDP-alpha-D-glucose(out) = UDP-alpha-D-galactose(out) + UDP-alpha-D-glucose(in). It catalyses the reaction UMP(out) + CMP(in) = UMP(in) + CMP(out). The enzyme catalyses UMP(out) + AMP(in) = UMP(in) + AMP(out). Its function is as follows. Transports uridine diphosphate galactose (UDP-galactose) from the cytosol into the Golgi apparatus, functioning as an antiporter that exchanges UDP-galactose for UMP. It is also able to exchange UDP-galactose for AMP and CMP, and to transport UDP-N-acetylgalactosamine (UDP-GalNAc) and other nucleotide sugars. As a provider of UDP-galactose to galactosyltransferases present in the Golgi apparatus, it is necessary for globotriaosylceramide/globoside (Gb3Cer) synthesis from lactosylceramide. The polypeptide is UDP-galactose translocator (Homo sapiens (Human)).